The chain runs to 144 residues: Large ribosomal subunit protein uL15 (144 aa).

Residues 1 to 48 are disordered; the sequence is MIKLEYLQDPSPRKRRTKLLGRGPSSGHGKTSGRGHKGDGSRSGYKRR.

The protein belongs to the universal ribosomal protein uL15 family. As to quaternary structure, part of the 50S ribosomal subunit.

Functionally, binds to the 23S rRNA. The sequence is that of Large ribosomal subunit protein uL15 from Chlamydia muridarum (strain MoPn / Nigg).